The following is a 61-amino-acid chain: Small ribosomal subunit protein uS14 (61 aa).

Zn(2+) contacts are provided by Cys24, Cys27, Cys40, and Cys43.

Belongs to the universal ribosomal protein uS14 family. Zinc-binding uS14 subfamily. As to quaternary structure, part of the 30S ribosomal subunit. Contacts proteins S3 and S10. Zn(2+) serves as cofactor.

Its function is as follows. Binds 16S rRNA, required for the assembly of 30S particles and may also be responsible for determining the conformation of the 16S rRNA at the A site. This Streptococcus equi subsp. zooepidemicus (strain H70) protein is Small ribosomal subunit protein uS14.